The following is a 215-amino-acid chain: uncharacterized protein (215 aa).

2 disordered regions span residues 1 to 144 and 156 to 215; these read MPKG…PYLR and IQGH…GAPA. 4 stretches are compositionally biased toward low complexity: residues 16-29, 49-58, 85-96, and 104-127; these read ASTPSRSSWPASPT, SSSWPKSPIK, SGSSSPGPSSSR, and STAASSRSPATSARSTSSCPRAAP.

This is an uncharacterized protein from Homo sapiens (Human).